A 302-amino-acid polypeptide reads, in one-letter code: Sulfate adenylyltransferase subunit 2 (302 aa).

Belongs to the PAPS reductase family. CysD subfamily. In terms of assembly, heterodimer composed of CysD, the smaller subunit, and CysN.

The enzyme catalyses sulfate + ATP + H(+) = adenosine 5'-phosphosulfate + diphosphate. It functions in the pathway sulfur metabolism; hydrogen sulfide biosynthesis; sulfite from sulfate: step 1/3. Its function is as follows. With CysN forms the ATP sulfurylase (ATPS) that catalyzes the adenylation of sulfate producing adenosine 5'-phosphosulfate (APS) and diphosphate, the first enzymatic step in sulfur assimilation pathway. APS synthesis involves the formation of a high-energy phosphoric-sulfuric acid anhydride bond driven by GTP hydrolysis by CysN coupled to ATP hydrolysis by CysD. This chain is Sulfate adenylyltransferase subunit 2, found in Aeromonas hydrophila subsp. hydrophila (strain ATCC 7966 / DSM 30187 / BCRC 13018 / CCUG 14551 / JCM 1027 / KCTC 2358 / NCIMB 9240 / NCTC 8049).